A 290-amino-acid polypeptide reads, in one-letter code: uncharacterized protein (290 aa).

K203 serves as the catalytic Schiff-base intermediate with substrate.

The protein belongs to the DeoC/FbaB aldolase family.

This is an uncharacterized protein from Pasteurella multocida (strain Pm70).